The chain runs to 579 residues: Nuclear receptor subfamily 1 group D member 2 (579 aa).

The required for phosphorylation by CSNK1E and cytoplasmic localization stretch occupies residues 1–60 (MEVNAGGVIAYISSSSSASSPASCHSEGSENSFQSSSSSVPSSPNSSNSDTNGNPKNGDL). Residues 1 to 99 (MEVNAGGVIA…HSGVTKFSGM (99 aa)) are modulating. Low complexity predominate over residues 13-54 (SSSSSASSPASCHSEGSENSFQSSSSSVPSSPNSSNSDTNGN). The tract at residues 13–61 (SSSSSASSPASCHSEGSENSFQSSSSSVPSSPNSSNSDTNGNPKNGDLA) is disordered. At S46 the chain carries Phosphoserine; by GSK3-beta. Residues 100–176 (VLLCKVCGDV…VGMSRDAVRF (77 aa)) constitute a DNA-binding region (nuclear receptor). 2 NR C4-type zinc fingers span residues 103–123 (CKVCGDVASGFHYGVHACEGC) and 140–164 (CLKNENCSIMRMNRNRCQQCRFKKC). N6-acetyllysine; by KAT5 occurs at positions 162 and 163. The disordered stretch occupies residues 222–250 (PAQEQLRPKPQLEQENIKSSSPPSSDFAK). The segment covering 227–237 (LRPKPQLEQEN) has biased composition (basic and acidic residues). 2 cysteine pairs are disulfide-bonded: C337–C343 and C374–C384. Positions 369-579 (KNSYLCNTGG…EELLAFKVHP (211 aa)) constitute an NR LBD domain. C384 and H568 together coordinate heme. The interaction with ZNHIT1 stretch occupies residues 397-579 (SGHEIWEEFS…EELLAFKVHP (183 aa)).

This sequence belongs to the nuclear hormone receptor family. NR1 subfamily. As to quaternary structure, binds DNA as a monomer or a homodimer. Interacts with NCOA5 coactivator, leading to a strong increase of transcription of target genes. Interacts (via N-terminus) with KAT5. Interacts (via C-terminus) with HDAC1. Interacts with ZNHIT1. Interacts with SIAH2. Deacetylated by HDAC1. Acetylation and deacetylation regulate its transcriptional regulatory activity. Post-translationally, under more reducing intracellular redox conditions, Cys-384 is in its heme-bound state, which is optimal for recruitment of the NCOR1/HDAC3 corepressor complex and repression of target genes. When subjected to oxidative stress conditions, Cys-384 undergoes oxidation to form a disulfide bridge with Cys-374, also triggering a ligand switch that results in release of bound heme and derepression of target genes. In terms of processing, ubiquitinated by SIAH2; leading to proteasomal degradation. Phosphorylated by CSNK1E; phosphorylation enhances its cytoplasmic localization. In terms of tissue distribution, widely expressed. Expressed at high levels in the liver, adipose tissue, skeletal muscle and brain. Expression oscillates diurnally in the suprachiasmatic nucleus (SCN) of the hypothalamus as well as in peripheral tissues.

It localises to the nucleus. It is found in the cytoplasm. Its activity is regulated as follows. The heme-bound form can bind gaseous signaling molecules such as CO and nitric oxide (NO) and NO can reverse its transcriptional repressor activity. In terms of biological role, transcriptional repressor which coordinates circadian rhythm and metabolic pathways in a heme-dependent manner. Integral component of the complex transcription machinery that governs circadian rhythmicity and forms a critical negative limb of the circadian clock by directly repressing the expression of core clock components BMAL1 and CLOCK. Also regulates genes involved in metabolic functions, including lipid metabolism and the inflammatory response. Acts as a receptor for heme which stimulates its interaction with the NCOR1/HDAC3 corepressor complex, enhancing transcriptional repression. Recognizes two classes of DNA response elements within the promoter of its target genes and can bind to DNA as either monomers or homodimers, depending on the nature of the response element. Binds as a monomer to a response element composed of the consensus half-site motif 5'-[A/G]GGTCA-3' preceded by an A/T-rich 5' sequence (RevRE), or as a homodimer to a direct repeat of the core motif spaced by two nuclegotides (RevDR-2). Acts as a potent competitive repressor of ROR alpha (RORA) function and also negatively regulates the expression of NR1D1. Regulates lipid and energy homeostasis in the skeletal muscle via repression of genes involved in lipid metabolism and myogenesis including: CD36, FABP3, FABP4, UCP3, SCD1 and MSTN. Regulates hepatic lipid metabolism via the repression of APOC3. Represses gene expression at a distance in macrophages by inhibiting the transcription of enhancer-derived RNAs (eRNAs). In addition to its activity as a repressor, can also act as a transcriptional activator. Acts as a transcriptional activator of the sterol regulatory element-binding protein 1 (SREBF1) and the inflammatory mediator interleukin-6 (IL6) in the skeletal muscle. Plays a role in the regulation of circadian sleep/wake cycle; essential for maintaining wakefulness during the dark phase or active period. Key regulator of skeletal muscle mitochondrial function; negatively regulates the skeletal muscle expression of core clock genes and genes involved in mitochondrial biogenesis, fatty acid beta-oxidation and lipid metabolism. May play a role in the circadian control of neutrophilic inflammation in the lung. In Homo sapiens (Human), this protein is Nuclear receptor subfamily 1 group D member 2.